A 232-amino-acid chain; its full sequence is Protein TIFY 10c (232 aa).

Positions 54–73 (PPAAGAGGAFRPPPTTMNLL) are disordered. Positions 114–149 (AGEKAQQLTIFYGGKVVVFENFPSTKVKDLLQIVST) constitute a Tify domain. Residues 152–177 (GVDKNTGTAATQSLPRPAHNSLPDLP) form a disordered region. A compositionally biased stretch (polar residues) spans 156 to 165 (NTGTAATQSL). The Jas motif lies at 177 to 202 (PIARRNSLHRFLEKRKGRMNANAPYQ). The Nuclear localization signal motif lies at 179-186 (ARRNSLHR).

Belongs to the TIFY/JAZ family. As to quaternary structure, interacts with BHLH148. Interacts with COI1B in a coronatine-dependent manner. Coronatine is an analog of jasmonoyl isoleucine (JA-Ile). Interacts with TIFY5/JAZ2, TIFY6B/JAZ4, TIFY9/JAZ5, TIFY11A, TIFY11D/JAZ12, TIFY11G/JAZ15 and NINJA1. Ubiquitinated. Increase in jasmonoyl isoleucine (JA-Ile) levels mediates its degradation via COI1B-mediated proteasome pathway.

It is found in the nucleus. Its subcellular location is the cytoplasm. The protein resides in the cytosol. Repressor of jasmonate (JA) responses. Acts as a repressor of JA-induced resistance to the bacterial blight pathogen Xanthomonas oryzae pv. oryzae (Xoo). Regulates JA-induced accumulation of linalool at the transcriptional level of linalool synthase gene LIS. Linalool is important for resistance to bacterial blight pathogen Xoo. In Oryza sativa subsp. japonica (Rice), this protein is Protein TIFY 10c.